The chain runs to 570 residues: Urease subunit alpha (570 aa).

In terms of domain architecture, Urease spans 131–570 (GGMDSHIHFI…LPMAQRYFLF (440 aa)). Residues H136, H138, and K219 each coordinate Ni(2+). An N6-carboxylysine modification is found at K219. H221 contacts substrate. Ni(2+) is bound by residues H248 and H274. Catalysis depends on H322, which acts as the Proton donor. Residue D362 participates in Ni(2+) binding.

This sequence belongs to the metallo-dependent hydrolases superfamily. Urease alpha subunit family. Heterotrimer of UreA (gamma), UreB (beta) and UreC (alpha) subunits. Three heterotrimers associate to form the active enzyme. Ni cation is required as a cofactor. Carboxylation allows a single lysine to coordinate two nickel ions.

The protein resides in the cytoplasm. It catalyses the reaction urea + 2 H2O + H(+) = hydrogencarbonate + 2 NH4(+). It functions in the pathway nitrogen metabolism; urea degradation; CO(2) and NH(3) from urea (urease route): step 1/1. The sequence is that of Urease subunit alpha from Rhizobium johnstonii (strain DSM 114642 / LMG 32736 / 3841) (Rhizobium leguminosarum bv. viciae).